The primary structure comprises 378 residues: Alanine racemase (378 aa).

Lys40 serves as the catalytic Proton acceptor; specific for D-alanine. At Lys40 the chain carries N6-(pyridoxal phosphate)lysine. Arg140 provides a ligand contact to substrate. The Proton acceptor; specific for L-alanine role is filled by Tyr270. Met317 contributes to the substrate binding site.

This sequence belongs to the alanine racemase family. The cofactor is pyridoxal 5'-phosphate.

The enzyme catalyses L-alanine = D-alanine. It functions in the pathway amino-acid biosynthesis; D-alanine biosynthesis; D-alanine from L-alanine: step 1/1. Its function is as follows. Catalyzes the interconversion of L-alanine and D-alanine. May also act on other amino acids. This Lacticaseibacillus paracasei (strain ATCC 334 / BCRC 17002 / CCUG 31169 / CIP 107868 / KCTC 3260 / NRRL B-441) (Lactobacillus paracasei) protein is Alanine racemase (alr).